Reading from the N-terminus, the 438-residue chain is Ribosomal protein uS12 methylthiotransferase RimO (438 aa).

Residues 5–116 (PTIAISHLGC…IVQVIQRVEN (112 aa)) enclose the MTTase N-terminal domain. The [4Fe-4S] cluster site is built by Cys-14, Cys-50, Cys-79, Cys-154, Cys-158, and Cys-161. In terms of domain architecture, Radical SAM core spans 140–369 (TTSEGVAYLR…MQIQQPISLQ (230 aa)). Residues 372-438 (CACIGDIVDV…IYDLYGEVIN (67 aa)) enclose the TRAM domain.

Belongs to the methylthiotransferase family. RimO subfamily. [4Fe-4S] cluster is required as a cofactor.

The protein resides in the cytoplasm. The catalysed reaction is L-aspartate(89)-[ribosomal protein uS12]-hydrogen + (sulfur carrier)-SH + AH2 + 2 S-adenosyl-L-methionine = 3-methylsulfanyl-L-aspartate(89)-[ribosomal protein uS12]-hydrogen + (sulfur carrier)-H + 5'-deoxyadenosine + L-methionine + A + S-adenosyl-L-homocysteine + 2 H(+). Functionally, catalyzes the methylthiolation of an aspartic acid residue of ribosomal protein uS12. The chain is Ribosomal protein uS12 methylthiotransferase RimO from Gloeothece citriformis (strain PCC 7424) (Cyanothece sp. (strain PCC 7424)).